The following is a 115-amino-acid chain: Large ribosomal subunit protein bL19 (115 aa).

This sequence belongs to the bacterial ribosomal protein bL19 family.

Its function is as follows. This protein is located at the 30S-50S ribosomal subunit interface and may play a role in the structure and function of the aminoacyl-tRNA binding site. This is Large ribosomal subunit protein bL19 from Desulforapulum autotrophicum (strain ATCC 43914 / DSM 3382 / VKM B-1955 / HRM2) (Desulfobacterium autotrophicum).